Reading from the N-terminus, the 765-residue chain is Probable dipeptidyl peptidase 4 (765 aa).

Residues methionine 1–alanine 14 form the signal peptide. N-linked (GlcNAc...) asparagine glycosylation is found at asparagine 35, asparagine 78, asparagine 101, asparagine 110, asparagine 169, asparagine 218, asparagine 465, and asparagine 490. Serine 613 serves as the catalytic Charge relay system. A glycan (N-linked (GlcNAc...) asparagine) is linked at asparagine 665. Residues aspartate 690 and histidine 725 each act as charge relay system in the active site.

Belongs to the peptidase S9B family.

Its subcellular location is the secreted. It carries out the reaction Release of an N-terminal dipeptide, Xaa-Yaa-|-Zaa-, from a polypeptide, preferentially when Yaa is Pro, provided Zaa is neither Pro nor hydroxyproline.. Extracellular dipeptidyl-peptidase which removes N-terminal dipeptides sequentially from polypeptides having unsubstituted N-termini provided that the penultimate residue is proline. Contributes to pathogenicity. In Aspergillus fumigatus (strain CBS 144.89 / FGSC A1163 / CEA10) (Neosartorya fumigata), this protein is Probable dipeptidyl peptidase 4 (dpp4).